A 182-amino-acid polypeptide reads, in one-letter code: Large ribosomal subunit protein uL6 (182 aa).

This sequence belongs to the universal ribosomal protein uL6 family. As to quaternary structure, part of the 50S ribosomal subunit.

This protein binds to the 23S rRNA, and is important in its secondary structure. It is located near the subunit interface in the base of the L7/L12 stalk, and near the tRNA binding site of the peptidyltransferase center. The protein is Large ribosomal subunit protein uL6 of Methanococcus maripaludis (strain C7 / ATCC BAA-1331).